A 200-amino-acid chain; its full sequence is Large ribosomal subunit protein bL25 (200 aa).

Belongs to the bacterial ribosomal protein bL25 family. CTC subfamily. Part of the 50S ribosomal subunit; part of the 5S rRNA/L5/L18/L25 subcomplex. Contacts the 5S rRNA. Binds to the 5S rRNA independently of L5 and L18.

This is one of the proteins that binds to the 5S RNA in the ribosome where it forms part of the central protuberance. This Pseudomonas fluorescens (strain Pf0-1) protein is Large ribosomal subunit protein bL25.